The primary structure comprises 478 residues: Aspartyl/glutamyl-tRNA(Asn/Gln) amidotransferase subunit B 1 (478 aa).

This sequence belongs to the GatB/GatE family. GatB subfamily. As to quaternary structure, heterotrimer of A, B and C subunits.

The enzyme catalyses L-glutamyl-tRNA(Gln) + L-glutamine + ATP + H2O = L-glutaminyl-tRNA(Gln) + L-glutamate + ADP + phosphate + H(+). The catalysed reaction is L-aspartyl-tRNA(Asn) + L-glutamine + ATP + H2O = L-asparaginyl-tRNA(Asn) + L-glutamate + ADP + phosphate + 2 H(+). Allows the formation of correctly charged Asn-tRNA(Asn) or Gln-tRNA(Gln) through the transamidation of misacylated Asp-tRNA(Asn) or Glu-tRNA(Gln) in organisms which lack either or both of asparaginyl-tRNA or glutaminyl-tRNA synthetases. The reaction takes place in the presence of glutamine and ATP through an activated phospho-Asp-tRNA(Asn) or phospho-Glu-tRNA(Gln). In Syntrophus aciditrophicus (strain SB), this protein is Aspartyl/glutamyl-tRNA(Asn/Gln) amidotransferase subunit B 1.